A 20-amino-acid chain; its full sequence is Cicerin (20 aa).

Residues 1-20 (ARCENFADSYRQPPISSSQT) form a disordered region.

Functionally, has antifungal activity against B.cinerea, F.oxysporum and M.arachidicola. Inhibits cell-free translation in rabbit reticulocyte lysate system. This chain is Cicerin, found in Cicer arietinum (Chickpea).